Consider the following 868-residue polypeptide: LPS-assembly protein LptD (868 aa).

The N-terminal stretch at 1–24 (MLKGIHKYLLMCFGTVLFTVQANA) is a signal peptide.

Belongs to the LptD family. In terms of assembly, component of the lipopolysaccharide transport and assembly complex. Interacts with LptE and LptA.

The protein localises to the cell outer membrane. Its function is as follows. Together with LptE, is involved in the assembly of lipopolysaccharide (LPS) at the surface of the outer membrane. The polypeptide is LPS-assembly protein LptD (Francisella tularensis subsp. novicida (strain U112)).